Reading from the N-terminus, the 410-residue chain is Mating-type locus allele B7 protein (410 aa).

A variable domain between B alleles region spans residues 1–110; the sequence is MSSDPNFSLT…VNVGSPAVGC (110 aa). The homeobox; TALE-type DNA-binding region spans 107-184; sequence AVGCRNLSED…NARRRSGWSH (78 aa). Residues 111 to 410 form a highly conserved between B alleles region; it reads RNLSEDLPAY…PFLCLSVAFV (300 aa). 3 disordered regions span residues 202–225, 278–336, and 374–394; these read RAKL…SNNL, TPKP…PELS, and ARGN…QPDE. A Nuclear localization signal motif is present at residues 276–308; sequence KKTPKPGMPRPVTTVAKRQPARKTKPAAKPNSR. A compositionally biased stretch (polar residues) spans 306–336; sequence NSRTANPRASTTPSIDSTLDSSKLESTPELS. The interval 333–410 is not essential for B7 function; it reads PELSMCSTAD…PFLCLSVAFV (78 aa). Basic residues predominate over residues 375–388; that stretch reads RGNRKVKALPKRAG.

This sequence belongs to the TALE/M-ATYP homeobox family.

The protein localises to the nucleus. In terms of biological role, the B locus has at least 25 alleles, and any combination of two different B alleles yields a multimeric regulatory protein, that activates genes responsible for the pathogenicity and for the sexual development of the fungus within the corn plant. This chain is Mating-type locus allele B7 protein, found in Mycosarcoma maydis (Corn smut fungus).